Consider the following 262-residue polypeptide: ELL-associated factor 2 (262 aa).

Positions 17–104 are necessary for interaction with ELL; sequence LKLGESFEKQ…TGECRLEKLS (88 aa). Residues 124-144 show a composition bias toward polar residues; the sequence is LEQQQQQMWNPPRTSNLVQHS. 2 disordered regions span residues 124-154 and 170-232; these read LEQQ…SPTS and MDQM…ADTT. 3 positions are modified to phosphoserine: Ser146, Ser151, and Ser154. Over residues 174–192 the composition is skewed to low complexity; the sequence is SSCDSSSDSRSSSSSSSED. The tract at residues 177-262 is necessary for transactivation activity; that stretch reads DSSSDSRSSS…LSESDSDSED (86 aa). The interval 248–262 is necessary for interaction with TCEA1 and transactivation activity; that stretch reads RSDLQLSESDSDSED.

Belongs to the EAF family. As to quaternary structure, component of the super elongation complex (SEC), at least composed of EAF1, EAF2, CDK9, MLLT3/AF9, AFF (AFF1 or AFF4), the P-TEFb complex and ELL (ELL, ELL2 or ELL3). Interacts with ELL, ELL2 and TCEA1.

It localises to the nucleus speckle. In terms of biological role, acts as a transcriptional transactivator of ELL, ELL2 and TCEA1 elongation activities. Potent inducer of apoptosis in prostatic and non-prostatic cell lines. The sequence is that of ELL-associated factor 2 (Eaf2) from Rattus norvegicus (Rat).